The following is a 367-amino-acid chain: Peptidyl-prolyl cis-trans isomerase D (367 aa).

The 165-residue stretch at 7–171 (FFEVAIGGKT…QPVTIVDCGE (165 aa)) folds into the PPIase cyclophilin-type domain. TPR repeat units follow at residues 213–246 (IEKL…LEDY), 264–297 (ISCY…ETVA), and 302–335 (AKAL…EPAD).

Belongs to the cyclophilin-type PPIase family. PPIase D subfamily.

It localises to the cytoplasm. The catalysed reaction is [protein]-peptidylproline (omega=180) = [protein]-peptidylproline (omega=0). PPIases accelerate the folding of proteins. It catalyzes the cis-trans isomerization of proline imidic peptide bonds in oligopeptides. This chain is Peptidyl-prolyl cis-trans isomerase D (CPR6), found in Yarrowia lipolytica (strain CLIB 122 / E 150) (Yeast).